The sequence spans 343 residues: MNFVQQNREGDAILVSLRPDTLEDYIGQEEVKKKLYIAMKAAKLRNEPLDHILFSGPPGLGKTTLAFVIAKEMGKNIHITSGPVLERQGDIAAILSSIEEGDILFIDEIHRINKAVEEVFYSALEDYKVDIMIGKGPTARSIRIGLKPFTLVGATTRSGLLSSPLRNRFGMILELQFYTVKELMEIIKRACKIMNIEIEESAAQLIASRARGTPRIALRLLKRVRDVATIRKENKIISHLVEKTMDILEIDKLGLDEMDRKILRTLIEIYDGGPVGIEALAATLNLEIDTLKEIHEPYLLQQGLIIRTPRGRVATGIAYEHLGYPSKISGGLFDESLRKSDES.

Residues 1-178 (MNFVQQNREG…FGMILELQFY (178 aa)) are large ATPase domain (RuvB-L). ATP contacts are provided by residues Leu17, Arg18, Gly59, Lys62, Thr63, Thr64, 125 to 127 (EDY), Arg168, Tyr178, and Arg215. Mg(2+) is bound at residue Thr63. The interval 179–249 (TVKELMEIIK…LVEKTMDILE (71 aa)) is small ATPAse domain (RuvB-S). The head domain (RuvB-H) stretch occupies residues 252–343 (KLGLDEMDRK…DESLRKSDES (92 aa)). DNA is bound by residues Arg307 and Arg312.

This sequence belongs to the RuvB family. In terms of assembly, homohexamer. Forms an RuvA(8)-RuvB(12)-Holliday junction (HJ) complex. HJ DNA is sandwiched between 2 RuvA tetramers; dsDNA enters through RuvA and exits via RuvB. An RuvB hexamer assembles on each DNA strand where it exits the tetramer. Each RuvB hexamer is contacted by two RuvA subunits (via domain III) on 2 adjacent RuvB subunits; this complex drives branch migration. In the full resolvosome a probable DNA-RuvA(4)-RuvB(12)-RuvC(2) complex forms which resolves the HJ.

It is found in the cytoplasm. It catalyses the reaction ATP + H2O = ADP + phosphate + H(+). The RuvA-RuvB-RuvC complex processes Holliday junction (HJ) DNA during genetic recombination and DNA repair, while the RuvA-RuvB complex plays an important role in the rescue of blocked DNA replication forks via replication fork reversal (RFR). RuvA specifically binds to HJ cruciform DNA, conferring on it an open structure. The RuvB hexamer acts as an ATP-dependent pump, pulling dsDNA into and through the RuvAB complex. RuvB forms 2 homohexamers on either side of HJ DNA bound by 1 or 2 RuvA tetramers; 4 subunits per hexamer contact DNA at a time. Coordinated motions by a converter formed by DNA-disengaged RuvB subunits stimulates ATP hydrolysis and nucleotide exchange. Immobilization of the converter enables RuvB to convert the ATP-contained energy into a lever motion, pulling 2 nucleotides of DNA out of the RuvA tetramer per ATP hydrolyzed, thus driving DNA branch migration. The RuvB motors rotate together with the DNA substrate, which together with the progressing nucleotide cycle form the mechanistic basis for DNA recombination by continuous HJ branch migration. Branch migration allows RuvC to scan DNA until it finds its consensus sequence, where it cleaves and resolves cruciform DNA. The sequence is that of Holliday junction branch migration complex subunit RuvB from Pseudothermotoga lettingae (strain ATCC BAA-301 / DSM 14385 / NBRC 107922 / TMO) (Thermotoga lettingae).